The chain runs to 95 residues: Feather keratin B-4 (95 aa).

Position 1 is an N-acetylserine (serine 1).

Belongs to the avian keratin family. As to quaternary structure, the avian keratins (F-ker, S-ker, C-ker and B-ker) are a complex mixture of very similar polypeptides.

This chain is Feather keratin B-4, found in Anas platyrhynchos (Mallard).